The primary structure comprises 147 residues: Large ribosomal subunit protein uL11 (147 aa).

Belongs to the universal ribosomal protein uL11 family. As to quaternary structure, part of the ribosomal stalk of the 50S ribosomal subunit. Interacts with L10 and the large rRNA to form the base of the stalk. L10 forms an elongated spine to which L12 dimers bind in a sequential fashion forming a multimeric L10(L12)X complex. In terms of processing, one or more lysine residues are methylated.

Its function is as follows. Forms part of the ribosomal stalk which helps the ribosome interact with GTP-bound translation factors. The protein is Large ribosomal subunit protein uL11 of Sorangium cellulosum (strain So ce56) (Polyangium cellulosum (strain So ce56)).